The following is a 111-amino-acid chain: NADH-ubiquinone oxidoreductase chain 3 (111 aa).

A run of 3 helical transmembrane segments spans residues 2–22, 54–74, and 82–102; these read ILIWLSIFMLVFIMLTLGMFV, FFVITLIFLIFDVEIYLLLPM, and PTTYLIIFFTFILVAGVFYEW.

It belongs to the complex I subunit 3 family.

It localises to the mitochondrion membrane. It carries out the reaction a ubiquinone + NADH + 5 H(+)(in) = a ubiquinol + NAD(+) + 4 H(+)(out). Core subunit of the mitochondrial membrane respiratory chain NADH dehydrogenase (Complex I) that is believed to belong to the minimal assembly required for catalysis. Complex I functions in the transfer of electrons from NADH to the respiratory chain. The immediate electron acceptor for the enzyme is believed to be ubiquinone. This is NADH-ubiquinone oxidoreductase chain 3 (ND3) from Artemia franciscana (Brine shrimp).